We begin with the raw amino-acid sequence, 271 residues long: ATP synthase subunit a (271 aa).

Helical transmembrane passes span 38–58 (FWTL…LFLV), 100–120 (LIAP…LMDL), 146–166 (DVNI…FYSI), 220–240 (LIFI…LNVP), and 242–262 (AIFH…LTIV).

This sequence belongs to the ATPase A chain family. F-type ATPases have 2 components, CF(1) - the catalytic core - and CF(0) - the membrane proton channel. CF(1) has five subunits: alpha(3), beta(3), gamma(1), delta(1), epsilon(1). CF(0) has three main subunits: a(1), b(2) and c(9-12). The alpha and beta chains form an alternating ring which encloses part of the gamma chain. CF(1) is attached to CF(0) by a central stalk formed by the gamma and epsilon chains, while a peripheral stalk is formed by the delta and b chains.

The protein resides in the cell inner membrane. In terms of biological role, key component of the proton channel; it plays a direct role in the translocation of protons across the membrane. The chain is ATP synthase subunit a from Salmonella arizonae (strain ATCC BAA-731 / CDC346-86 / RSK2980).